We begin with the raw amino-acid sequence, 865 residues long: Protein translocase subunit SecA (865 aa).

ATP contacts are provided by residues Gln93, 111 to 115 (GEGKT), and Asp501. Cys841, Cys843, Cys852, and Cys853 together coordinate Zn(2+).

Belongs to the SecA family. In terms of assembly, monomer and homodimer. Part of the essential Sec protein translocation apparatus which comprises SecA, SecYEG and auxiliary proteins SecDF-YajC and YidC. It depends on Zn(2+) as a cofactor.

The protein localises to the cell inner membrane. It is found in the cytoplasm. It carries out the reaction ATP + H2O + cellular proteinSide 1 = ADP + phosphate + cellular proteinSide 2.. In terms of biological role, part of the Sec protein translocase complex. Interacts with the SecYEG preprotein conducting channel. Has a central role in coupling the hydrolysis of ATP to the transfer of proteins into and across the cell membrane, serving as an ATP-driven molecular motor driving the stepwise translocation of polypeptide chains across the membrane. This Helicobacter pylori (strain G27) protein is Protein translocase subunit SecA.